A 522-amino-acid chain; its full sequence is Probable G-protein coupled receptor egl-47 (522 aa).

7 consecutive transmembrane segments (helical) span residues 140–160 (IIKL…NSFL), 184–204 (ASMI…LSAI), 238–258 (FVFF…KVVE), 276–296 (FILV…YHLY), 345–365 (PLLL…LYFL), 398–418 (ICWA…ICST), and 472–492 (LERT…LLLF).

The protein belongs to the G-protein coupled receptor family. Expressed in some neurons in the head, the HSN neurons and the PVQ interneurons of the tail.

The protein resides in the membrane. Orphan receptor. Regulates egg-laying probably by activating guanine nucleotide-binding protein goa-1, in the hermaphrodite-specific neurons (HSNs). The protein is Probable G-protein coupled receptor egl-47 of Caenorhabditis elegans.